Consider the following 229-residue polypeptide: Ribonuclease 3 (229 aa).

The RNase III domain maps to Trp4–Gly133. A Mg(2+)-binding site is contributed by Glu46. The active site involves Asp50. Mg(2+) contacts are provided by Asp119 and Glu122. The active site involves Glu122. The DRBM domain occupies Asp159–His228.

It belongs to the ribonuclease III family. In terms of assembly, homodimer. Mg(2+) serves as cofactor.

The protein resides in the cytoplasm. The catalysed reaction is Endonucleolytic cleavage to 5'-phosphomonoester.. In terms of biological role, digests double-stranded RNA. Involved in the processing of primary rRNA transcript to yield the immediate precursors to the large and small rRNAs (23S and 16S). Processes some mRNAs, and tRNAs when they are encoded in the rRNA operon. Processes pre-crRNA and tracrRNA of type II CRISPR loci if present in the organism. The sequence is that of Ribonuclease 3 from Listeria monocytogenes serotype 4a (strain HCC23).